The following is a 345-amino-acid chain: Fructose-1,6-bisphosphatase class 1 (345 aa).

Mg(2+) is bound by residues Glu-90, Asp-109, Leu-111, and Asp-112. Residues 112–115 (DGSS) and Asn-200 contribute to the substrate site. Glu-272 serves as a coordination point for Mg(2+).

Belongs to the FBPase class 1 family. Homotetramer. Mg(2+) is required as a cofactor.

The protein resides in the cytoplasm. The enzyme catalyses beta-D-fructose 1,6-bisphosphate + H2O = beta-D-fructose 6-phosphate + phosphate. Its pathway is carbohydrate biosynthesis; gluconeogenesis. This chain is Fructose-1,6-bisphosphatase class 1, found in Bradyrhizobium diazoefficiens (strain JCM 10833 / BCRC 13528 / IAM 13628 / NBRC 14792 / USDA 110).